We begin with the raw amino-acid sequence, 228 residues long: Death domain-containing membrane protein NRADD (228 aa).

Residues 1-52 (MLYNVSKGVVYSDTALQGQDGDREGMWVGAGGALAPNTSSLFPPEPPGASSN) lie on the Extracellular side of the membrane. N-linked (GlcNAc...) asparagine glycans are attached at residues Asn4 and Asn37. The helical; Signal-anchor for type III membrane protein transmembrane segment at 53-73 (IIPVYCALLATVILGLLAYVA) threads the bilayer. The Cytoplasmic portion of the chain corresponds to 74–228 (FKCWRSHKQR…SSPAESSSVV (155 aa)). The tract at residues 87–122 (AKARTVELGDPDRDQRRGDSNVFVDSPPSLEPCIPS) is disordered. The segment covering 90 to 105 (RTVELGDPDRDQRRGD) has biased composition (basic and acidic residues). Positions 143 to 222 (EEVQRLLMMG…DVVQVLSSPA (80 aa)) constitute a Death domain.

Interacts with NGFR. Interacts with NTRK1. Interacts with SORT1. In terms of tissue distribution, detected in lung and testis.

The protein localises to the cell membrane. It localises to the nucleus. Modulates NTRK1 signaling. Can activate several intracellular signaling pathways, leading to activation of JUN. Promotes apoptosis. Promotes translocation of SORT1 to the cell membrane, and thereby hinders lysosomal degradation of SOTR1 and promotes its interaction with NGFR. The polypeptide is Death domain-containing membrane protein NRADD (Nradd) (Mus musculus (Mouse)).